Here is a 160-residue protein sequence, read N- to C-terminus: Ribosomal RNA large subunit methyltransferase H (160 aa).

S-adenosyl-L-methionine is bound by residues Leu76, Gly108, and 127 to 132 (LGKMTW).

This sequence belongs to the RNA methyltransferase RlmH family. Homodimer.

It is found in the cytoplasm. The enzyme catalyses pseudouridine(1915) in 23S rRNA + S-adenosyl-L-methionine = N(3)-methylpseudouridine(1915) in 23S rRNA + S-adenosyl-L-homocysteine + H(+). In terms of biological role, specifically methylates the pseudouridine at position 1915 (m3Psi1915) in 23S rRNA. This chain is Ribosomal RNA large subunit methyltransferase H, found in Rhizobium johnstonii (strain DSM 114642 / LMG 32736 / 3841) (Rhizobium leguminosarum bv. viciae).